The sequence spans 64 residues: Large ribosomal subunit protein bL35 (64 aa).

Belongs to the bacterial ribosomal protein bL35 family.

This is Large ribosomal subunit protein bL35 from Acinetobacter baylyi (strain ATCC 33305 / BD413 / ADP1).